A 442-amino-acid chain; its full sequence is MPRARKGNTLRKGGQRRGGGARSSAQADSGSSDDEAASEARSTASECPSLLSTTAEDSLGGDVVDEQGQQEDLEEKLKEYVDCLTDKSAKTRQGALESLRLALASRLLPDFLLERRLTLADALEKCLKKGKGEEQALAAAVLGLLCVQLGPGPKGEELFHSLQPLLVSVLSDSTASPAARLHCASALGLGCYVAAADIQDLVSCLACLESVFSRFYGLGGSSTSPVVPASLHGLLSAALQAWALLLTICPSTQISHILDRQLPRLPQLLSSESVNLRIAAGETIALLFELARDLEEEFVYEDMEALCSVLRTLATDSNKYRAKADRRRQRSTFRAVLHSVEGGECEEEIVRFGFEVLYMDSWARHRIYAAFKEVLGSGMHHHLQNNELLRDIFGLGPVLLLDATALKACKVPRFEKHLYNAAAFKARTKARSRVRDKRADIL.

Residues 1 to 15 (MPRARKGNTLRKGGQ) show a composition bias toward basic residues. Residues 1-71 (MPRARKGNTL…DVVDEQGQQE (71 aa)) form a disordered region. Residues 43–56 (TASECPSLLSTTAE) are compositionally biased toward polar residues.

Belongs to the IFRD family. In terms of assembly, associates with ribosomes; promoting ribosome inactivation. In terms of tissue distribution, expressed in many tissues including heart, brain, placenta, lung, liver, skeletal muscle, kidney and pancreas.

Functionally, ribosome-binding protein that acts as an inhibitor of mRNA translation by promoting ribosome inactivation. Associates with the P- and E-sites of the ribosome and inserts a C-terminal helix into the mRNA exit channel to preclude translation. This Homo sapiens (Human) protein is Interferon-related developmental regulator 2.